The following is a 415-amino-acid chain: Queuine tRNA-ribosyltransferase accessory subunit 2 (415 aa).

Zn(2+)-binding residues include Cys351, Cys353, Cys356, and His382.

This sequence belongs to the queuine tRNA-ribosyltransferase family. QTRT2 subfamily. As to quaternary structure, heterodimer of a catalytic subunit qtrt1 and an accessory subunit qtrt2. Requires Zn(2+) as cofactor.

It localises to the cytoplasm. The protein localises to the mitochondrion outer membrane. Its function is as follows. Non-catalytic subunit of the queuine tRNA-ribosyltransferase (TGT) that catalyzes the base-exchange of a guanine (G) residue with queuine (Q) at position 34 (anticodon wobble position) in tRNAs with GU(N) anticodons (tRNA-Asp, -Asn, -His and -Tyr), resulting in the hypermodified nucleoside queuosine (7-(((4,5-cis-dihydroxy-2-cyclopenten-1-yl)amino)methyl)-7-deazaguanosine). This chain is Queuine tRNA-ribosyltransferase accessory subunit 2, found in Xenopus laevis (African clawed frog).